Here is a 224-residue protein sequence, read N- to C-terminus: uncharacterized protein (224 aa).

A signal peptide spans 1–16; it reads MKILYSFLLLPFFSCA.

This is an uncharacterized protein from Escherichia coli.